A 1259-amino-acid chain; its full sequence is Neural cell adhesion molecule L1 (1259 aa).

A signal peptide spans 1-19; that stretch reads MVMMLWYVLPLLLCSPCLL. The Extracellular segment spans residues 20–1122; the sequence is IQIPDEYKGH…VSTTGSFASE (1103 aa). 6 Ig-like C2-type domains span residues 35–128, 138–225, 239–327, 332–419, 424–506, and 517–600; these read PVIT…HEIQ, PKET…EPID, PRLL…YYVT, PYWL…AYIY, PARI…NNVT, and TQIT…DEVE. Cystine bridges form between cysteine 57-cysteine 113 and cysteine 157-cysteine 208. Asparagine 100, asparagine 202, asparagine 246, and asparagine 293 each carry an N-linked (GlcNAc...) asparagine glycan. Disulfide bonds link cysteine 263–cysteine 311 and cysteine 353–cysteine 403. Residues asparagine 432, asparagine 489, and asparagine 504 are each glycosylated (N-linked (GlcNAc...) asparagine). Cysteine 447 and cysteine 496 are disulfide-bonded. The cysteines at positions 538 and 590 are disulfide-linked. 2 short sequence motifs (cell attachment site) span residues 553 to 555 and 562 to 564; these read RGD. Fibronectin type-III domains lie at 613 to 711, 716 to 809, 811 to 916, 919 to 1014, and 1016 to 1116; these read PVPH…TPEA, NPVD…SGED, PQVS…PEGV, HPEA…MALF, and KPDF…VSTT. An N-linked (GlcNAc...) asparagine glycan is attached at asparagine 670. The disordered stretch occupies residues 697 to 724; it reads GEPSPVSETVVTPEAAPEKNPVDVRGEG. Residues 712 to 724 are compositionally biased toward basic and acidic residues; it reads APEKNPVDVRGEG. Asparagine 725, asparagine 776, asparagine 824, asparagine 848, asparagine 875, asparagine 968, asparagine 978, asparagine 1021, asparagine 1029, asparagine 1072, and asparagine 1106 each carry an N-linked (GlcNAc...) asparagine glycan. Residues 1123–1145 traverse the membrane as a helical segment; the sequence is GWFIAFVSAIILLLLILLILCFI. Topologically, residues 1146–1259 are cytoplasmic; it reads KRSKGGKYSV…SPINPAVALE (114 aa). Residues serine 1165, arginine 1179, serine 1180, serine 1183, serine 1196, serine 1245, serine 1246, and serine 1250 each carry the phosphoserine modification. 2 disordered regions span residues 1182-1209 and 1228-1259; these read ESDN…SDDS and IGQY…VALE. Over residues 1243 to 1252 the composition is skewed to polar residues; it reads NDSSGATSPI.

This sequence belongs to the immunoglobulin superfamily. L1/neurofascin/NgCAM family. In terms of assembly, interacts with SHTN1; the interaction occurs in axonal growth cones. Interacts with isoform 2 of BSG. As to expression, isoform 2 is predominantly found in the brain, while isoform 1 is found in the peripheral nervous system.

It is found in the cell membrane. It localises to the cell projection. Its subcellular location is the growth cone. Functionally, neural cell adhesion molecule involved in the dynamics of cell adhesion and in the generation of transmembrane signals at tyrosine kinase receptors. During brain development, critical in multiple processes, including neuronal migration, axonal growth and fasciculation, and synaptogenesis. In the mature brain, plays a role in the dynamics of neuronal structure and function, including synaptic plasticity. The chain is Neural cell adhesion molecule L1 (L1cam) from Rattus norvegicus (Rat).